The sequence spans 475 residues: Lipid II flippase MurJ (475 aa).

Topologically, residues 1–2 (MS) are cytoplasmic. Residues 3-23 (ILFSSILFSIATFFSRILGLF) traverse the membrane as a helical segment. Residues 24-35 (RDVLFAKYFGVS) lie on the Periplasmic side of the membrane. The chain crosses the membrane as a helical span at residues 36–56 (YELDAYFIAIMFPFFLRKVFG). Over 57–78 (EGAMSSAFVPLYSEKSGEEKDK) the chain is Cytoplasmic. A helical membrane pass occupies residues 79-99 (FLSSVINGFSLIILALVILSY). At 100–123 (FFPELIINLFGAGSSHETKILAKK) the chain is on the periplasmic side. The helical transmembrane segment at 124 to 144 (LLLITSPSIYFIFLWAISYSI) threads the bilayer. The Cytoplasmic segment spans residues 145–150 (LNTNNK). The helical transmembrane segment at 151-171 (FFWPALTPSISNITIIIGTFL) threads the bilayer. Residues 172–175 (STKY) are Periplasmic-facing. The helical transmembrane segment at 176–196 (GIISPTIGFLIGSILMFFSII) threads the bilayer. At 197–213 (KSIIKHKYYFTIKHFPH) the chain is on the cytoplasmic side. Residues 214-238 (FLKLFFPTFMTMVVSQINTVVDMNV) traverse the membrane as a helical segment. The Periplasmic portion of the chain corresponds to 239–249 (VSFYDKGSISY). A helical transmembrane segment spans residues 250–271 (LQYASRFYLLPYGLFAVSVSTV). Residues 272–287 (VLSKISNDRKNFNYHL) are Cytoplasmic-facing. The chain crosses the membrane as a helical span at residues 288 to 308 (NDALKTTLFFTIPSMVGLIFL). At 309 to 332 (STPIIRFFYEHGAFTSKDTLITSK) the chain is on the periplasmic side. The chain crosses the membrane as a helical span at residues 333-353 (ILIAYTLGLPFYGIYSTISRS). Residues 354–362 (YHAIKNTKT) are Cytoplasmic-facing. A helical transmembrane segment spans residues 363 to 383 (PFIAATIVSLSNIILDIIFGL). Residues 384 to 386 (KYG) lie on the Periplasmic side of the membrane. A helical transmembrane segment spans residues 387–407 (PIGVALATSIAGIIGVLYLLF). The Cytoplasmic segment spans residues 408–416 (SVKTFPIKD). The helical transmembrane segment at 417–437 (FLKISLNSLIMLFVIYLTDFT) threads the bilayer. Over 438-440 (DNE) the chain is Periplasmic. The helical transmembrane segment at 441-461 (FWFLIQILIGILVYLIFSSIF) threads the bilayer. At 462 to 475 (YRDLIRRFLYARKK) the chain is on the cytoplasmic side.

It belongs to the MurJ/MviN family.

The protein localises to the cell inner membrane. The protein operates within cell wall biogenesis; peptidoglycan biosynthesis. Functionally, involved in peptidoglycan biosynthesis. Transports lipid-linked peptidoglycan precursors from the inner to the outer leaflet of the cytoplasmic membrane. This Thermosipho africanus (strain TCF52B) protein is Lipid II flippase MurJ.